We begin with the raw amino-acid sequence, 467 residues long: Zinc finger and BTB domain-containing protein 43 (467 aa).

At M1 the chain carries N-acetylmethionine. Residues 33–97 enclose the BTB domain; it reads CDVSIVVQGH…SYTGRLVMPA (65 aa). 2 disordered regions span residues 134–153 and 162–225; these read LNHG…GLVE and HTDF…SAEF. Composition is skewed to basic and acidic residues over residues 164–174 and 182–194; these read DFPKAQELRDG and KDEL…EHEY. Residues K182, K241, K247, K297, and K358 each participate in a glycyl lysine isopeptide (Lys-Gly) (interchain with G-Cter in SUMO2) cross-link. The C2H2-type 1; atypical zinc finger occupies 373 to 394; the sequence is YPCQCGKSFTHKSQRDRHMSMH. The C2H2-type 2 zinc finger occupies 400-422; it reads YGCGVCGKKFKMKHHLVGHMKIH. Residue T423 is modified to Phosphothreonine. Residues 428 to 450 form a C2H2-type 3; atypical zinc finger; sequence YECNICAKRFMWRDSFHRHVTSC. Residue K458 forms a Glycyl lysine isopeptide (Lys-Gly) (interchain with G-Cter in SUMO2) linkage.

It belongs to the krueppel C2H2-type zinc-finger protein family. Interacts with BDP1.

The protein localises to the nucleus. Functionally, may be involved in transcriptional regulation. The protein is Zinc finger and BTB domain-containing protein 43 (ZBTB43) of Homo sapiens (Human).